An 89-amino-acid polypeptide reads, in one-letter code: Large ribosomal subunit protein eL34 (89 aa).

It belongs to the eukaryotic ribosomal protein eL34 family.

The sequence is that of Large ribosomal subunit protein eL34 (rpl34e) from Methanocaldococcus jannaschii (strain ATCC 43067 / DSM 2661 / JAL-1 / JCM 10045 / NBRC 100440) (Methanococcus jannaschii).